Consider the following 286-residue polypeptide: Phosphoribosylaminoimidazole-succinocarboxamide synthase (286 aa).

Belongs to the SAICAR synthetase family.

It catalyses the reaction 5-amino-1-(5-phospho-D-ribosyl)imidazole-4-carboxylate + L-aspartate + ATP = (2S)-2-[5-amino-1-(5-phospho-beta-D-ribosyl)imidazole-4-carboxamido]succinate + ADP + phosphate + 2 H(+). It participates in purine metabolism; IMP biosynthesis via de novo pathway; 5-amino-1-(5-phospho-D-ribosyl)imidazole-4-carboxamide from 5-amino-1-(5-phospho-D-ribosyl)imidazole-4-carboxylate: step 1/2. The protein is Phosphoribosylaminoimidazole-succinocarboxamide synthase of Mannheimia succiniciproducens (strain KCTC 0769BP / MBEL55E).